A 152-amino-acid chain; its full sequence is Globin, minor (152 aa).

One can recognise a Globin domain in the interval 12–152 (VNNSYHKDLL…ALIAVVQAAL (141 aa)). Residue histidine 104 coordinates heme b.

Belongs to the globin family.

The polypeptide is Globin, minor (Anadara trapezia (Sydney cockle)).